We begin with the raw amino-acid sequence, 129 residues long: Probable protein cornichon homolog 2 (129 aa).

The next 2 helical transmembrane spans lie at 45-65 (FIVQGVLCVFYLLTGHWFMTL) and 105-125 (LAYIVLNLFLTIFWMIYSALD).

It belongs to the cornichon family.

It localises to the membrane. This is Probable protein cornichon homolog 2 from Arabidopsis thaliana (Mouse-ear cress).